Consider the following 55-residue polypeptide: Large ribosomal subunit protein bL33 (55 aa).

Residues 1 to 11 are compositionally biased toward basic and acidic residues; the sequence is MAKGGREKIKL. The disordered stretch occupies residues 1-26; sequence MAKGGREKIKLESTAGTGHFYTTDKN.

This sequence belongs to the bacterial ribosomal protein bL33 family.

In Methylibium petroleiphilum (strain ATCC BAA-1232 / LMG 22953 / PM1), this protein is Large ribosomal subunit protein bL33.